Consider the following 316-residue polypeptide: Probable inactive poly [ADP-ribose] polymerase SRO4 (316 aa).

The interval 1 to 28 (MDYSKTEETPINEEQGSTNSSESRSNEE) is disordered. Positions 14 to 23 (EQGSTNSSES) are enriched in low complexity. The PARP catalytic domain occupies 28-255 (ELFSDCDQQH…KSPWISFPVL (228 aa)). The region spanning 243 to 314 (KNPKSPWISF…IKSVGQKVHK (72 aa)) is the RST domain.

The protein localises to the nucleus. Probable inactive ADP-ribosyltransferase that may be involved in stress and developmental responses. This chain is Probable inactive poly [ADP-ribose] polymerase SRO4 (SRO4), found in Arabidopsis thaliana (Mouse-ear cress).